A 284-amino-acid chain; its full sequence is Tropomyosin-1 (284 aa).

Disordered stretches follow at residues Met-1–Glu-26 and Glu-96–Asn-124. The stretch at Met-1–Ser-276 forms a coiled coil. The segment covering Lys-12–Glu-26 has biased composition (basic and acidic residues). A compositionally biased stretch (polar residues) spans Gly-107–Asp-121.

It belongs to the tropomyosin family. As to quaternary structure, homodimer.

Its function is as follows. Tropomyosin, in association with the troponin complex, plays a central role in the calcium dependent regulation of muscle contraction. This chain is Tropomyosin-1, found in Bombyx mori (Silk moth).